The sequence spans 297 residues: Transmembrane protein 178A (297 aa).

A signal peptide spans 1–25 (MEPRALVTALSLGLSLCSLGLLVTA). Residues 26–179 (IFTDHWYETD…LLHLRRITAG (154 aa)) are Extracellular-facing. Residues 41 to 57 (ESCERSRAGADPPDQKN) are compositionally biased toward basic and acidic residues. Residues 41–86 (ESCERSRAGADPPDQKNRLMPLSHLPLRDSPPLGRRLLPGGPGRSD) form a disordered region. Positions 68–79 (RDSPPLGRRLLP) are enriched in low complexity. Asn158 carries N-linked (GlcNAc...) asparagine glycosylation. The helical transmembrane segment at 180-200 (FLGMAVAVLLCGCIVATVSFF) threads the bilayer. Over 201-208 (WEESLTQH) the chain is Cytoplasmic. Residues 209–229 (VAGLLFLMTGIFCTISLCTYA) traverse the membrane as a helical segment. Topologically, residues 230–257 (ASVSYDLNRVPKLIYSLPHDVEHGYSWS) are extracellular. Residues 258–278 (IFCAWCSLGFIVAAGGLCIAY) traverse the membrane as a helical segment. Residues 279-297 (PFISRTKIAHLKSGRDSTV) lie on the Cytoplasmic side of the membrane.

It belongs to the TMEM178 family. As to quaternary structure, interacts with STIM1. As to expression, highly expressed in the bone and its expression increases during osteoclastogenesis.

Its subcellular location is the endoplasmic reticulum membrane. In terms of biological role, acts as a negative regulator of osteoclast differentiation in basal and inflammatory conditions by regulating TNFSF11-induced Ca (2+) fluxes, thereby controlling the induction of NFATC1. This Mus musculus (Mouse) protein is Transmembrane protein 178A (Tmem178a).